The chain runs to 87 residues: Apolipoprotein C-I (87 aa).

The signal sequence occupies residues 1 to 26; sequence MRLFLSLPVLVVVLAMVLEGPAPAQA.

Belongs to the apolipoprotein C1 family.

Its subcellular location is the secreted. Its function is as follows. Inhibitor of lipoprotein binding to the low density lipoprotein (LDL) receptor, LDL receptor-related protein, and very low density lipoprotein (VLDL) receptor. Associates with high density lipoproteins (HDL) and the triacylglycerol-rich lipoproteins in the plasma and makes up about 10% of the protein of the VLDL and 2% of that of HDL. Appears to interfere directly with fatty acid uptake and is also the major plasma inhibitor of cholesteryl ester transfer protein (CETP). Binds free fatty acids and reduces their intracellular esterification. Modulates the interaction of APOE with beta-migrating VLDL and inhibits binding of beta-VLDL to the LDL receptor-related protein. This Zalophus californianus (California sealion) protein is Apolipoprotein C-I (APOC1).